The following is a 426-amino-acid chain: Tyrosine--tRNA ligase (426 aa).

Tyr38 provides a ligand contact to L-tyrosine. The 'HIGH' region motif lies at 43 to 52 (PTADSLHIGS). Residues Tyr176 and Gln180 each contribute to the L-tyrosine site. The 'KMSKS' region motif lies at 236-240 (KFGKT). Residue Lys239 participates in ATP binding. Positions 359-426 (QTIVEVLTQS…KKLFNLYIWK (68 aa)) constitute an S4 RNA-binding domain.

Belongs to the class-I aminoacyl-tRNA synthetase family. TyrS type 1 subfamily. In terms of assembly, homodimer.

It localises to the cytoplasm. The enzyme catalyses tRNA(Tyr) + L-tyrosine + ATP = L-tyrosyl-tRNA(Tyr) + AMP + diphosphate + H(+). Its function is as follows. Catalyzes the attachment of tyrosine to tRNA(Tyr) in a two-step reaction: tyrosine is first activated by ATP to form Tyr-AMP and then transferred to the acceptor end of tRNA(Tyr). In Aliivibrio fischeri (strain ATCC 700601 / ES114) (Vibrio fischeri), this protein is Tyrosine--tRNA ligase.